The primary structure comprises 257 residues: UPF0246 protein RSKD131_2757 (257 aa).

It belongs to the UPF0246 family.

The sequence is that of UPF0246 protein RSKD131_2757 from Cereibacter sphaeroides (strain KD131 / KCTC 12085) (Rhodobacter sphaeroides).